The sequence spans 218 residues: Protein-methionine-sulfoxide reductase heme-binding subunit MsrQ (218 aa).

5 consecutive transmembrane segments (helical) span residues 14 to 34 (LVHA…WQVW), 60 to 80 (FLLI…AVVI), 86 to 106 (LGLY…TLDL), 121 to 141 (PYIT…ITST), and 155 to 175 (LHTL…WLVK).

This sequence belongs to the MsrQ family. Heterodimer of a catalytic subunit (MsrP) and a heme-binding subunit (MsrQ). Requires FMN as cofactor. It depends on heme b as a cofactor.

The protein resides in the cell inner membrane. Functionally, part of the MsrPQ system that repairs oxidized periplasmic proteins containing methionine sulfoxide residues (Met-O), using respiratory chain electrons. Thus protects these proteins from oxidative-stress damage caused by reactive species of oxygen and chlorine generated by the host defense mechanisms. MsrPQ is essential for the maintenance of envelope integrity under bleach stress, rescuing a wide series of structurally unrelated periplasmic proteins from methionine oxidation. MsrQ provides electrons for reduction to the reductase catalytic subunit MsrP, using the quinone pool of the respiratory chain. The chain is Protein-methionine-sulfoxide reductase heme-binding subunit MsrQ from Xanthomonas euvesicatoria pv. vesicatoria (strain 85-10) (Xanthomonas campestris pv. vesicatoria).